The primary structure comprises 101 residues: Iron-sulfur cluster assembly protein CyaY (101 aa).

The protein belongs to the frataxin family.

Its function is as follows. Involved in iron-sulfur (Fe-S) cluster assembly. May act as a regulator of Fe-S biogenesis. The protein is Iron-sulfur cluster assembly protein CyaY of Rickettsia akari (strain Hartford).